The primary structure comprises 261 residues: Thiazole synthase (261 aa).

K102 functions as the Schiff-base intermediate with DXP in the catalytic mechanism. 1-deoxy-D-xylulose 5-phosphate-binding positions include G163, 189 to 190 (AG), and 211 to 212 (NT).

Belongs to the ThiG family. Homotetramer. Forms heterodimers with either ThiH or ThiS.

It localises to the cytoplasm. The catalysed reaction is [ThiS sulfur-carrier protein]-C-terminal-Gly-aminoethanethioate + 2-iminoacetate + 1-deoxy-D-xylulose 5-phosphate = [ThiS sulfur-carrier protein]-C-terminal Gly-Gly + 2-[(2R,5Z)-2-carboxy-4-methylthiazol-5(2H)-ylidene]ethyl phosphate + 2 H2O + H(+). The protein operates within cofactor biosynthesis; thiamine diphosphate biosynthesis. In terms of biological role, catalyzes the rearrangement of 1-deoxy-D-xylulose 5-phosphate (DXP) to produce the thiazole phosphate moiety of thiamine. Sulfur is provided by the thiocarboxylate moiety of the carrier protein ThiS. In vitro, sulfur can be provided by H(2)S. The chain is Thiazole synthase from Acinetobacter baumannii (strain SDF).